The chain runs to 521 residues: Anaerobic nitric oxide reductase flavorubredoxin (521 aa).

The tract at residues 30-210 (HKGTSYNSYL…PFSPLVTAKI (181 aa)) is zinc metallo-hydrolase. Residues His-79, Glu-81, Asp-83, His-147, Asp-166, and His-227 each contribute to the Fe cation site. The Flavodoxin-like domain maps to 254-393 (ITLFYDSMSN…LCREHGRQLA (140 aa)). Residues 260–264 (SMSNN) and 342–369 (AFGS…DISI) each bind FMN. One can recognise a Rubredoxin-like domain in the interval 464 to 515 (DQPMLCTVCQWIYDPALGEPDQLVAPGTPWARVPDSFLCPGCGIGKEVFEPC). Fe cation is bound by residues Cys-469, Cys-472, Cys-502, and Cys-505.

It in the N-terminal section; belongs to the zinc metallo-hydrolase group 3 family. As to quaternary structure, homotetramer. Fe cation serves as cofactor. The cofactor is FMN.

Its subcellular location is the cytoplasm. The protein operates within nitrogen metabolism; nitric oxide reduction. Its function is as follows. Anaerobic nitric oxide reductase; uses NADH to detoxify nitric oxide (NO), protecting several 4Fe-4S NO-sensitive enzymes. Has at least 2 reductase partners, only one of which (NorW, flavorubredoxin reductase) has been identified. NO probably binds to the di-iron center; electrons enter from the NorW at rubredoxin and are transferred sequentially to the FMN center and the di-iron center. Also able to function as an aerobic oxygen reductase. The chain is Anaerobic nitric oxide reductase flavorubredoxin from Aeromonas salmonicida (strain A449).